The following is an 85-amino-acid chain: Phosphocarrier protein HPr (85 aa).

The HPr domain occupies 1–85 (MFQNQVKITA…HLSLIMTELE (85 aa)). The Pros-phosphohistidine intermediate role is filled by H15.

The protein belongs to the HPr family.

Its subcellular location is the cytoplasm. Functionally, general (non sugar-specific) component of the phosphoenolpyruvate-dependent sugar phosphotransferase system (sugar PTS). This major carbohydrate active-transport system catalyzes the phosphorylation of incoming sugar substrates concomitantly with their translocation across the cell membrane. The phosphoryl group from phosphoenolpyruvate (PEP) is transferred to the phosphoryl carrier protein HPr by enzyme I. Phospho-HPr then transfers it to the PTS EIIA domain. In Buchnera aphidicola subsp. Acyrthosiphon pisum (strain APS) (Acyrthosiphon pisum symbiotic bacterium), this protein is Phosphocarrier protein HPr (ptsH).